Reading from the N-terminus, the 373-residue chain is Beta sliding clamp homolog GriR (373 aa).

It belongs to the beta sliding clamp family. Forms a ring-shaped head-to-tail homodimer around DNA which binds and tethers DNA polymerases and other proteins to the DNA. The DNA replisome complex has a single clamp-loading complex (3 tau and 1 each of delta, delta', psi and chi subunits) which binds 3 Pol III cores (1 core on the leading strand and 2 on the lagging strand) each with a beta sliding clamp dimer. Additional proteins in the replisome are other copies of gamma, psi and chi, Ssb, DNA helicase and RNA primase.

Its subcellular location is the cytoplasm. In terms of biological role, a homolog of the beta sliding clamp protein encoded within the biosynthetic cluster for griselimycin synthesis. Upon expression in S.coelicolor A3(2), which is susceptible to this antibiotic, confers resistance to griselimycin. The beta sliding clamp confers DNA tethering and processivity to DNA polymerases and other proteins. Acts as a clamp, forming a ring around DNA (a reaction catalyzed by the clamp-loading complex) which diffuses in an ATP-independent manner freely and bidirectionally along dsDNA. Initially characterized for its ability to contact the catalytic subunit of DNA polymerase III (Pol III), a complex, multichain enzyme responsible for most of the replicative synthesis in bacteria; Pol III exhibits 3'-5' exonuclease proofreading activity. The beta chain is required for initiation of replication as well as for processivity of DNA replication. The chain is Beta sliding clamp homolog GriR from Streptomyces muensis.